A 148-amino-acid polypeptide reads, in one-letter code: Deoxyuridine 5'-triphosphate nucleotidohydrolase (148 aa).

Substrate is bound by residues 68–70, Asn-81, 85–87, and Lys-95; these read RSG and TID.

This sequence belongs to the dUTPase family. The cofactor is Mg(2+).

The catalysed reaction is dUTP + H2O = dUMP + diphosphate + H(+). Its pathway is pyrimidine metabolism; dUMP biosynthesis; dUMP from dCTP (dUTP route): step 2/2. Its function is as follows. This enzyme is involved in nucleotide metabolism: it produces dUMP, the immediate precursor of thymidine nucleotides and it decreases the intracellular concentration of dUTP so that uracil cannot be incorporated into DNA. The sequence is that of Deoxyuridine 5'-triphosphate nucleotidohydrolase from Rickettsia conorii (strain ATCC VR-613 / Malish 7).